The chain runs to 38 residues: Photosystem II reaction center protein L (38 aa).

The chain crosses the membrane as a helical span at residues 17–37 (SLFWGLLLIFVLAVLFSSYFF).

It belongs to the PsbL family. PSII is composed of 1 copy each of membrane proteins PsbA, PsbB, PsbC, PsbD, PsbE, PsbF, PsbH, PsbI, PsbJ, PsbK, PsbL, PsbM, PsbT, PsbX, PsbY, PsbZ, Psb30/Ycf12, at least 3 peripheral proteins of the oxygen-evolving complex and a large number of cofactors. It forms dimeric complexes.

It is found in the plastid. The protein resides in the chloroplast thylakoid membrane. One of the components of the core complex of photosystem II (PSII). PSII is a light-driven water:plastoquinone oxidoreductase that uses light energy to abstract electrons from H(2)O, generating O(2) and a proton gradient subsequently used for ATP formation. It consists of a core antenna complex that captures photons, and an electron transfer chain that converts photonic excitation into a charge separation. This subunit is found at the monomer-monomer interface and is required for correct PSII assembly and/or dimerization. This is Photosystem II reaction center protein L from Rhodomonas salina (Cryptomonas salina).